A 671-amino-acid polypeptide reads, in one-letter code: Putative ubiquitin thioesterase 232R (671 aa).

Disordered stretches follow at residues 36–62 (EIIDYQKNNPPRRSPSPRRSPSPRRIS), 100–123 (SPKIPSPVRQPSPVHSPVRSPVRQ), 171–203 (NQKPPRRSPSPRRSPSPRRSPSPRRSPSPRPVF), and 250–319 (EPIR…SKRS). The span at 110–123 (PSPVHSPVRSPVRQ) shows a compositional bias: low complexity. The span at 182 to 200 (RRSPSPRRSPSPRRSPSPR) shows a compositional bias: pro residues. Residues 255–271 (SSSSRSSRSTRRSSSTK) are compositionally biased toward low complexity. A compositionally biased stretch (basic residues) spans 272–319 (PSRRSSSRSRRSSSRSRRSSSRSRRSSSRSRRSSRRSTSRSRSLSKRS). In terms of domain architecture, OTU spans 392–521 (FRMINVPLDG…NFHYIALEPF (130 aa)). The active site involves Asp400. Cys403 functions as the Nucleophile in the catalytic mechanism. His514 is an active-site residue. The tract at residues 589–625 (KRSLRPSIPPKISTEHRRTPKLRPSVPRPSSIRQSQP) is disordered.

The catalysed reaction is Thiol-dependent hydrolysis of ester, thioester, amide, peptide and isopeptide bonds formed by the C-terminal Gly of ubiquitin (a 76-residue protein attached to proteins as an intracellular targeting signal).. Its function is as follows. Hydrolase that can remove conjugated ubiquitin from proteins and may therefore play an important regulatory role at the level of protein turnover by preventing degradation. In Acheta domesticus (House cricket), this protein is Putative ubiquitin thioesterase 232R.